The chain runs to 183 residues: Capsid protein (183 aa).

A disordered region spans residues 143–183 (LPETTVVRRRGRSPRRRTPSPRRRRSQSPRRRRSQSRESQC). Positions 149–176 (VRRRGRSPRRRTPSPRRRRSQSPRRRRS) are enriched in basic residues. Residues Ser155, Ser162, and Ser170 each carry the phosphoserine; by host modification. Residues 155–161 (SPRRRTP) form a 1; half-length repeat. The 3 X 8 AA repeats of S-P-R-R-R-[PR]-S-Q stretch occupies residues 155–177 (SPRRRTPSPRRRRSQSPRRRRSQ). The short motif at 158–175 (RRTPSPRRRRSQSPRRRR) is the Bipartite nuclear localization signal element. A run of 2 repeats spans residues 162–169 (SPRRRRSQ) and 170–177 (SPRRRRSQ). Positions 177–183 (QSRESQC) are RNA binding.

It belongs to the orthohepadnavirus core antigen family. Homodimerizes, then multimerizes. Interacts with cytosol exposed regions of viral L glycoprotein present in the reticulum-to-Golgi compartment. Interacts with human FLNB. Phosphorylated form interacts with host importin alpha; this interaction depends on the exposure of the NLS, which itself depends upon genome maturation and/or phosphorylation of the capsid protein. Interacts with host NUP153. Post-translationally, phosphorylated by host SRPK1, SRPK2, and maybe protein kinase C or GAPDH. Phosphorylation is critical for pregenomic RNA packaging. Protein kinase C phosphorylation is stimulated by HBx protein and may play a role in transport of the viral genome to the nucleus at the late step during the viral replication cycle.

The protein resides in the virion. The protein localises to the host cytoplasm. Functionally, self assembles to form an icosahedral capsid. Most capsids appear to be large particles with an icosahedral symmetry of T=4 and consist of 240 copies of capsid protein, though a fraction forms smaller T=3 particles consisting of 180 capsid proteins. Entering capsids are transported along microtubules to the nucleus. Phosphorylation of the capsid is thought to induce exposure of nuclear localization signal in the C-terminal portion of the capsid protein that allows binding to the nuclear pore complex via the importin (karyopherin-) alpha and beta. Capsids are imported in intact form through the nuclear pore into the nuclear basket, where it probably binds NUP153. Only capsids that contain the mature viral genome can release the viral DNA and capsid protein into the nucleoplasm. Immature capsids get stuck in the basket. Capsids encapsulate the pre-genomic RNA and the P protein. Pre-genomic RNA is reverse-transcribed into DNA while the capsid is still in the cytoplasm. The capsid can then either be directed to the nucleus, providing more genomes for transcription, or bud through the endoplasmic reticulum to provide new virions. This Homo sapiens (Human) protein is Capsid protein.